Reading from the N-terminus, the 603-residue chain is Geraniol synthase Tps-5073G30, chloroplastic (603 aa).

The N-terminal 35 residues, M1 to S35, are a transit peptide targeting the chloroplast. 5 residues coordinate (2E)-geranyl diphosphate: R319, D356, D360, R497, and D500. D356 and D360 together coordinate Mg(2+). The short motif at D356–D360 is the DDXXD motif element. D500, T504, and E508 together coordinate Mg(2+).

This sequence belongs to the terpene synthase family. Tpsb subfamily. Monomer. The cofactor is Mg(2+). Mn(2+) serves as cofactor.

It localises to the plastid. The protein localises to the chloroplast. The catalysed reaction is (2E)-geranyl diphosphate + H2O = (2E)-geraniol + diphosphate. The protein operates within secondary metabolite biosynthesis; terpenoid biosynthesis. Monoterpene synthase (mono-TPS) involved in the biosynthesis of monoterpenes natural products. Catalyzes the conversion of (2E)-geranyl diphosphate (GPP) into geraniol. This is Geraniol synthase Tps-5073G30, chloroplastic from Perilla frutescens (Beefsteak mint).